The primary structure comprises 375 residues: E3 ubiquitin-protein ligase RHF2A (375 aa).

Residues 33–74 (CSICLESFCESDPSTLTSCKHEYHLQCILEWCQRSSQCPMCW) form an RING-type; atypical zinc finger. Residues 146–159 (RARHGVRREGHRSR) are compositionally biased toward basic residues. 3 disordered regions span residues 146–165 (RARHGVRREGHRSRSSSQGH), 172–262 (SSQP…SESL), and 318–375 (ERLE…SGSS). Pro residues predominate over residues 178 to 188 (SSPPPHPPMPS). Composition is skewed to polar residues over residues 211-245 (SHQSNTQPPTSSHPRQVSPSASDSNSRPLNQSSPS) and 327-336 (RPSTASVSDV). Over residues 337 to 365 (SENHTPETNNEHNRAAAGDEHSVNERGVK) the composition is skewed to basic and acidic residues.

The enzyme catalyses S-ubiquitinyl-[E2 ubiquitin-conjugating enzyme]-L-cysteine + [acceptor protein]-L-lysine = [E2 ubiquitin-conjugating enzyme]-L-cysteine + N(6)-ubiquitinyl-[acceptor protein]-L-lysine.. Its pathway is protein modification; protein ubiquitination. Its function is as follows. E3 ubiquitin-protein ligase involved in the positive regulation of the gametogenesis progression. Required for the degradation of KRP6, a cyclin-dependent kinase inhibitor which accumulates during meiosis and blocks the progression of subsequent mitoses during gametophytes development. Functions in association with RHF1A. The protein is E3 ubiquitin-protein ligase RHF2A of Arabidopsis thaliana (Mouse-ear cress).